Here is a 339-residue protein sequence, read N- to C-terminus: tRNA N6-adenosine threonylcarbamoyltransferase (339 aa).

2 residues coordinate Fe cation: His-111 and His-115. Residues 134 to 138 (LVSGG), Asp-167, Gly-180, and Asn-272 contribute to the substrate site. A Fe cation-binding site is contributed by Asp-300.

Belongs to the KAE1 / TsaD family. The cofactor is Fe(2+).

It is found in the cytoplasm. It carries out the reaction L-threonylcarbamoyladenylate + adenosine(37) in tRNA = N(6)-L-threonylcarbamoyladenosine(37) in tRNA + AMP + H(+). Required for the formation of a threonylcarbamoyl group on adenosine at position 37 (t(6)A37) in tRNAs that read codons beginning with adenine. Is involved in the transfer of the threonylcarbamoyl moiety of threonylcarbamoyl-AMP (TC-AMP) to the N6 group of A37, together with TsaE and TsaB. TsaD likely plays a direct catalytic role in this reaction. This chain is tRNA N6-adenosine threonylcarbamoyltransferase, found in Vibrio vulnificus (strain YJ016).